Here is a 449-residue protein sequence, read N- to C-terminus: Phosphoglucosamine mutase (449 aa).

Ser-102 (phosphoserine intermediate) is an active-site residue. Residues Ser-102, Asp-241, Asp-243, and Asp-245 each coordinate Mg(2+). Position 102 is a phosphoserine (Ser-102).

It belongs to the phosphohexose mutase family. Requires Mg(2+) as cofactor. In terms of processing, activated by phosphorylation.

The catalysed reaction is alpha-D-glucosamine 1-phosphate = D-glucosamine 6-phosphate. Catalyzes the conversion of glucosamine-6-phosphate to glucosamine-1-phosphate. The protein is Phosphoglucosamine mutase of Pseudoalteromonas translucida (strain TAC 125).